A 926-amino-acid polypeptide reads, in one-letter code: Storkhead-box protein 2 (926 aa).

Disordered stretches follow at residues 1-32, 338-393, 452-529, 564-586, 633-693, 723-802, and 823-926; these read MKKTRSTTLRRAWPSSDFSDRASDRMRSRSEK, EEEK…DIPG, EMPF…SYID, KEPSSACSLLEPGKTPESMPSYG, VKKL…SLDK, LLKS…VGTM, and TLLT…VTSV. Residues 18-32 are compositionally biased toward basic and acidic residues; sequence FSDRASDRMRSRSEK. Positions 353–378 are enriched in basic residues; it reads HSGRSKKSRTHRKSHGKSRSHSKTRV. The segment covering 379 to 393 has biased composition (basic and acidic residues); sequence SKGDPSDGSHLDIPG. Residues 463 to 472 are compositionally biased toward basic residues; sequence SHSKVHRSHS. The span at 473–495 shows a compositional bias: basic and acidic residues; the sequence is HTQDRRSRNERSNKAKERSRSMD. Over residues 518 to 529 the composition is skewed to polar residues; it reads QDDQTPSQSYID. Basic and acidic residues-rich tracts occupy residues 633-658 and 684-693; these read VKKLSPSERQTPHSSREPVGHKEESP and HSAEPSSLDK. Over residues 746–769 the composition is skewed to polar residues; it reads LGTSAAQAMPPSQRQQEPGGNQEA. Residues 785–799 are compositionally biased toward basic and acidic residues; the sequence is GANKNAEEEKNRDDV. 2 stretches are compositionally biased toward polar residues: residues 847–884 and 914–926; these read MDSSSITVDSGFNSPRTRESLASNTSSIVESNRRQNPA and KPSNCLQASVTSV.

The chain is Storkhead-box protein 2 (Stox2) from Mus musculus (Mouse).